Reading from the N-terminus, the 156-residue chain is H/ACA ribonucleoprotein complex subunit NHP2 (156 aa).

Belongs to the eukaryotic ribosomal protein eL8 family. As to quaternary structure, component of the small nucleolar ribonucleoprotein particles containing H/ACA-type snoRNAs (H/ACA snoRNPs). The protein component of the H/ACA snoRNP contains CBF5, GAR1, NHP2 and NOP10. The complex contains a stable core composed of CBF5 and NOP10, to which GAR1 and NHP2 subsequently bind. Interacts with SHQ1. Interacts with NAF1.

The protein resides in the nucleus. It localises to the nucleolus. In terms of biological role, non-catalytic component of the H/ACA small nucleolar ribonucleoprotein (H/ACA snoRNP), which catalyzes pseudouridylation of rRNA and is required for ribosome biogenesis. This involves the isomerization of uridine such that the ribose is subsequently attached to C5, instead of the normal N1. Pseudouridine ('psi') residues may serve to stabilize the conformation of rRNAs. The H/ACA snoRNP complex also mediates pseudouridylation of other types of RNAs. The H/ACA snoRNP complex mediates pseudouridylation at position 93 in U2 snRNA. Essential for growth. Directly binds H/ACA snoRNAs. The chain is H/ACA ribonucleoprotein complex subunit NHP2 (NHP2) from Saccharomyces cerevisiae (strain ATCC 204508 / S288c) (Baker's yeast).